The primary structure comprises 304 residues: Probable WRKY transcription factor 29 (304 aa).

2 disordered regions span residues 76-96 and 185-236; these read LPED…GCLL and YTNE…IPSA. The segment covering 78-88 has biased composition (basic and acidic residues); sequence EDSKPFRDDKK. The segment at residues 128-194 is a DNA-binding region (WRKY); sequence KEENLLSDAW…YTNEHNHELP (67 aa). 2 stretches are compositionally biased toward polar residues: residues 196-213 and 225-236; these read RRNS…QPKP and SSPTSNPMIPSA.

This sequence belongs to the WRKY group II-e family.

The protein localises to the nucleus. In terms of biological role, transcription factor involved in the expression of defense genes in innate immune response of plants. Interacts specifically with the W box (5'-(T)TGAC[CT]-3'), a frequently occurring elicitor-responsive cis-acting element. Activates WRKY 22, SIRK and its own promoters. This chain is Probable WRKY transcription factor 29 (WRKY29), found in Arabidopsis thaliana (Mouse-ear cress).